A 328-amino-acid polypeptide reads, in one-letter code: Phosphate acyltransferase (328 aa).

The protein belongs to the PlsX family. Homodimer. Probably interacts with PlsY.

Its subcellular location is the cytoplasm. The enzyme catalyses a fatty acyl-[ACP] + phosphate = an acyl phosphate + holo-[ACP]. Its pathway is lipid metabolism; phospholipid metabolism. Functionally, catalyzes the reversible formation of acyl-phosphate (acyl-PO(4)) from acyl-[acyl-carrier-protein] (acyl-ACP). This enzyme utilizes acyl-ACP as fatty acyl donor, but not acyl-CoA. This Staphylococcus aureus (strain Mu3 / ATCC 700698) protein is Phosphate acyltransferase.